We begin with the raw amino-acid sequence, 308 residues long: MITFLPIIFSILVVVTFVIGNCANGFIALVNSTEWVKRQKISFADQILTALAVSRVGLLWVLLLNWYATVLNPAFYSVEVRTIVYNLWAVINHFSNWLATSLSIFYLLKIANFSNLIFLHLKRRVKSVVLVILLGPLLFLVCHLFVVNMNEIVRTKEYEGNMTWKSKLRSAMYLSNTTVTILANLVPFILTLISFLLLICSLCKHLKKMQLRDKGSQDPSTKVHIKALQTVISLLLCVIYFLSIMISSWSLGRVENKAVFMFCKAIRFSYPSAHAFILIWGNKKLKQTLLSVLWNVRYCVKGQKLPSP.

Residue M1 is a topological domain, extracellular. The chain crosses the membrane as a helical span at residues 2–22 (ITFLPIIFSILVVVTFVIGNC). Topologically, residues 23 to 46 (ANGFIALVNSTEWVKRQKISFADQ) are cytoplasmic. The helical transmembrane segment at 47-67 (ILTALAVSRVGLLWVLLLNWY) threads the bilayer. The Extracellular segment spans residues 68–86 (ATVLNPAFYSVEVRTIVYN). Residues 87–107 (LWAVINHFSNWLATSLSIFYL) traverse the membrane as a helical segment. Over 108 to 126 (LKIANFSNLIFLHLKRRVK) the chain is Cytoplasmic. A helical transmembrane segment spans residues 127-147 (SVVLVILLGPLLFLVCHLFVV). Residues 148–178 (NMNEIVRTKEYEGNMTWKSKLRSAMYLSNTT) lie on the Extracellular side of the membrane. N-linked (GlcNAc...) asparagine glycosylation is found at N161 and N176. Residues 179–199 (VTILANLVPFILTLISFLLLI) form a helical membrane-spanning segment. At 200 to 229 (CSLCKHLKKMQLRDKGSQDPSTKVHIKALQ) the chain is on the cytoplasmic side. Residues 230-249 (TVISLLLCVIYFLSIMISSW) form a helical membrane-spanning segment. The Extracellular segment spans residues 250 to 258 (SLGRVENKA). Residues 259–279 (VFMFCKAIRFSYPSAHAFILI) form a helical membrane-spanning segment. Topologically, residues 280–308 (WGNKKLKQTLLSVLWNVRYCVKGQKLPSP) are cytoplasmic.

Belongs to the G-protein coupled receptor T2R family.

It localises to the membrane. Its subcellular location is the cell projection. The protein resides in the cilium membrane. Gustducin-coupled receptor immplicated in the perception of bitter compounds in the oral cavity and the gastrointestinal tract. Signals through PLCB2 and the calcium-regulated cation channel TRPM5. Activated by the sulfonyl amide sweeteners saccharin and acesulfame K. In airway epithelial cells, binding of bitter compounds increases the intracellular calcium ion concentration and stimulates ciliary beat frequency. May act as chemosensory receptors in airway epithelial cells to detect and eliminate potential noxious agents from the airways. This is Taste receptor type 2 member 43 (TAS2R43) from Papio hamadryas (Hamadryas baboon).